The primary structure comprises 119 residues: DNA-binding protein inhibitor ID-3 (119 aa).

The bHLH domain occupies arginine 28–leucine 80.

Homodimer, and heterodimer with other HLH proteins. Interacts with COPS5 and COPS7A. Interacts with IFI204. Interacts with GATA4 and NKX2-5. Interacts with ANKRD2; both proteins cooperate in myoblast differentiation. Interacts with CLOCK and BMAL1. Phosphorylated in vitro by CDC2 and PKC.

It localises to the nucleus. Its function is as follows. Transcriptional regulator (lacking a basic DNA binding domain) which negatively regulates the basic helix-loop-helix (bHLH) transcription factors by forming heterodimers and inhibiting their DNA binding and transcriptional activity. Implicated in regulating a variety of cellular processes, including cellular growth, senescence, differentiation, apoptosis, angiogenesis, and neoplastic transformation. Involved in myogenesis by inhibiting skeletal muscle and cardiac myocyte differentiation and promoting muscle precursor cells proliferation. Inhibits the binding of E2A-containing protein complexes to muscle creatine kinase E-box enhancer. Regulates the circadian clock by repressing the transcriptional activator activity of the CLOCK-BMAL1 heterodimer. The protein is DNA-binding protein inhibitor ID-3 (Id3) of Rattus norvegicus (Rat).